The chain runs to 347 residues: MTDTLASLAYLAGKPTAQAKIKAKPEHFQVREDLGFEFTGSGEHLMVRIRKTGENTSFVANELAKACGVKSKDVSWAGLKDRHAVTEQWLSVHLPKAETPDFSAFLAQYPSIEILTTARHNKKLRPGDLVGNDFVVTLSEVSDVDDVLKRLETVAKLGVPNYFGNQRFGNNGNNLQEAKRWGRDNVRSRNQNQRSLYLSAARSWIFNLIVSARLEQSLFDKVLLGDILFKGDEQLLVSAENHADLQSQYDAGDLVISGALAGDNALPTQDDALALEQVFLDAEPDLMALIRGNRMRHDRRAIALKPANLSWQVDGNNIILTFSLDAGSFATSIIRELVQEIAFEREF.

Catalysis depends on aspartate 81, which acts as the Nucleophile. The 147-residue stretch at 158–304 (GVPNYFGNQR…MRHDRRAIAL (147 aa)) folds into the TRUD domain.

Belongs to the pseudouridine synthase TruD family.

It catalyses the reaction uridine(13) in tRNA = pseudouridine(13) in tRNA. Responsible for synthesis of pseudouridine from uracil-13 in transfer RNAs. The polypeptide is tRNA pseudouridine synthase D (Vibrio vulnificus (strain CMCP6)).